The primary structure comprises 790 residues: Accumulates dyads protein 3 (790 aa).

The interval 8 to 122 is disordered; the sequence is LNKPESLKEQ…NTLKSPNKFL (115 aa). A compositionally biased stretch (basic and acidic residues) spans 39–49; it reads PESKPFRERRS. 2 stretches are compositionally biased toward polar residues: residues 50–78 and 89–108; these read QTWI…ISKL and ESWA…TLEN. Coiled-coil stretches lie at residues 241–328, 361–430, 477–498, and 540–658; these read ISKE…REEK, LVSE…RLND, KNLE…LEKN, and QQFR…LKKL.

Interacts directly with SSP1. Probable component of a SPB complex composed of ADY3, SSP1, DON1, MPC54, SPO21/MPC70, NUD1 and CNM67. In terms of processing, phosphorylated.

It localises to the prospore membrane. It is found in the cytoplasm. The protein localises to the cytoskeleton. Its subcellular location is the microtubule organizing center. The protein resides in the spindle pole body. In terms of biological role, involved in the pathway that organizes the prospore membrane (PSM) during sporulation. Mediates the assembly of the DON1 ring structure at the leading edge of PSM during meiosis II. May constitute a physical link between SSP1-containing PSM precursors and the spindle pole body (SPB) and may facilitate the recruitment of other factors that are required to promote spore wall formation. This Saccharomyces cerevisiae (strain ATCC 204508 / S288c) (Baker's yeast) protein is Accumulates dyads protein 3 (ADY3).